Consider the following 315-residue polypeptide: L-lactate dehydrogenase (315 aa).

Positions 12, 33, and 65 each coordinate NAD(+). Residues Gln-82, Arg-88, and 120-123 (NPVD) each bind substrate. NAD(+) contacts are provided by residues 118-120 (ISN) and Ser-143. Position 148 to 151 (148 to 151 (DTSR)) interacts with substrate. The beta-D-fructose 1,6-bisphosphate site is built by Arg-153 and His-168. His-175 (proton acceptor) is an active-site residue. Residue Tyr-219 is modified to Phosphotyrosine. Thr-228 serves as a coordination point for substrate.

Belongs to the LDH/MDH superfamily. LDH family. Homotetramer.

It localises to the cytoplasm. The catalysed reaction is (S)-lactate + NAD(+) = pyruvate + NADH + H(+). Its pathway is fermentation; pyruvate fermentation to lactate; (S)-lactate from pyruvate: step 1/1. With respect to regulation, allosterically activated by fructose 1,6-bisphosphate (FBP). Catalyzes the conversion of lactate to pyruvate. This Mycoplasmopsis pulmonis (strain UAB CTIP) (Mycoplasma pulmonis) protein is L-lactate dehydrogenase.